The chain runs to 429 residues: Adenylosuccinate synthetase (429 aa).

GTP is bound by residues 13-19 (GDEGKGK) and 41-43 (GHT). D14 serves as the catalytic Proton acceptor. Residues D14 and G41 each coordinate Mg(2+). Residues 14–17 (DEGK), 39–42 (NAGH), T130, R144, Q225, T240, and R304 contribute to the IMP site. The active-site Proton donor is H42. 300 to 306 (ATTGRAR) provides a ligand contact to substrate. GTP contacts are provided by residues R306, 332–334 (KLD), and 414–416 (STG).

This sequence belongs to the adenylosuccinate synthetase family. In terms of assembly, homodimer. Mg(2+) is required as a cofactor.

Its subcellular location is the cytoplasm. It carries out the reaction IMP + L-aspartate + GTP = N(6)-(1,2-dicarboxyethyl)-AMP + GDP + phosphate + 2 H(+). It participates in purine metabolism; AMP biosynthesis via de novo pathway; AMP from IMP: step 1/2. Its function is as follows. Plays an important role in the de novo pathway of purine nucleotide biosynthesis. Catalyzes the first committed step in the biosynthesis of AMP from IMP. The polypeptide is Adenylosuccinate synthetase (Acidithiobacillus ferrooxidans (Thiobacillus ferrooxidans)).